We begin with the raw amino-acid sequence, 526 residues long: ATP synthase subunit alpha (526 aa).

171 to 178 (GDRQTGKT) is a binding site for ATP.

This sequence belongs to the ATPase alpha/beta chains family. As to quaternary structure, F-type ATPases have 2 components, CF(1) - the catalytic core - and CF(0) - the membrane proton channel. CF(1) has five subunits: alpha(3), beta(3), gamma(1), delta(1), epsilon(1). CF(0) has four main subunits: a, b, b' and c.

The protein resides in the cell inner membrane. It catalyses the reaction ATP + H2O + 4 H(+)(in) = ADP + phosphate + 5 H(+)(out). Produces ATP from ADP in the presence of a proton gradient across the membrane. The alpha chain is a regulatory subunit. The polypeptide is ATP synthase subunit alpha (Pelodictyon phaeoclathratiforme (strain DSM 5477 / BU-1)).